A 481-amino-acid polypeptide reads, in one-letter code: Vanillin dehydrogenase (481 aa).

NAD(+) is bound at residue 228–233 (GSTHVG). Active-site residues include Glu-250 and Cys-284.

Belongs to the aldehyde dehydrogenase family.

The enzyme catalyses vanillin + NAD(+) + H2O = vanillate + NADH + 2 H(+). In terms of biological role, catalyzes the NAD-dependent oxidation of vanillin to vanillic acid. This Pseudomonas sp. (strain HR199 / DSM 7063) protein is Vanillin dehydrogenase (vdh).